The following is a 308-amino-acid chain: Polyketide transferase claH (308 aa).

Residues 50 to 280 are abhydrolase domain; the sequence is SDIAVYFSQQ…RVEVAAGKSH (231 aa).

The protein belongs to the polyketide transferase af380 family.

It participates in secondary metabolite biosynthesis. Its function is as follows. Polyketide transferase; part of the cla gene cluster that produces clavatol and ortho-quinone methide. The clavatol biosynthesis cluster cla and the terrestric acid cluster tra are both involved in the production of peniphenones and penilactones. The non-reducing PKS claF is responsible for the formation of clavatol from successive condensations of 3 malonyl-CoA units, presumably with a simple acetyl-CoA starter unit, and 2 methylation steps. The esterase claE probably collaborates with claF by catalyzing the hydrolysis of ACP-bound acyl intermediates to free the ACP from stalled intermediates. The clavatol oxidase claD then converts clavatol to hydroxyclavatol. Spontaneous dehydration of hydroxyclavatol leads to the accumulation of the highly active ortho-quinone methide. On the other hand, the PKS-NRPS hybrid traA is involved in the formation of crustosic acid, with the help of traB and traD. The polyketide synthase module (PKS) of traA is responsible for the synthesis of the polyketide backbone via the condensation of an acetyl-CoA starter unit with 3 malonyl-CoA units. The downstream nonribosomal peptide synthetase (NRPS) module then amidates the carboxyl end of the polyketide with L-malic acid. Because traA lacks a designated enoylreductase (ER) domain, the required activity is provided the enoyl reductase traG. Crustosic acid undergoes decarboxylation and isomerization to the terrestric acid, catalyzed by the 2-oxoglutarate-dependent dioxygenase traH. Both acids are further converted to the 2 gamma-butyrolactones (R)-5-methyltetronic acid and (S)-5-carboxylmethyltetronic acid, with involvement of the cytochrome P450 monooxygenase claJ. Spontaneous addition of the methide to these gamma-butyrolactones leads to peniphenone D and penilactone D, which undergo again stereospecific attacking by methide to give penilactones A and B. The function of the polyketide transferase claH has not been investigated yet. In Penicillium crustosum (Blue mold fungus), this protein is Polyketide transferase claH.